Here is a 104-residue protein sequence, read N- to C-terminus: N(4)-acetylcytidine amidohydrolase (104 aa).

Residues 7 to 95 (MTFFERFETD…IQDIYPGISQ (89 aa)) enclose the ASCH domain. Residue K22 is the Proton acceptor of the active site. The Nucleophile role is filled by T25. E75 functions as the Proton donor in the catalytic mechanism.

This sequence belongs to the N(4)-acetylcytidine amidohydrolase family.

The catalysed reaction is N(4)-acetylcytidine + H2O = cytidine + acetate + H(+). It carries out the reaction N(4)-acetyl-2'-deoxycytidine + H2O = 2'-deoxycytidine + acetate + H(+). It catalyses the reaction N(4)-acetylcytosine + H2O = cytosine + acetate + H(+). In terms of biological role, catalyzes the hydrolysis of N(4)-acetylcytidine (ac4C). The protein is N(4)-acetylcytidine amidohydrolase of Vibrio atlanticus (strain LGP32) (Vibrio splendidus (strain Mel32)).